The sequence spans 309 residues: Formate-nitrite transporter (309 aa).

Residues Met-1–Cys-19 are Cytoplasmic-facing. Residues Gly-20–Lys-35 constitute an intramembrane region (helical). Topologically, residues Ala-36 to Asn-40 are cytoplasmic. The chain crosses the membrane as a helical span at residues Leu-41 to Phe-68. Residues Tyr-69–Ala-79 are Extracellular-facing. Residues Ser-80–Thr-100 form a helical membrane-spanning segment. Topologically, residues Gly-101–Lys-122 are cytoplasmic. Residues Leu-123–Tyr-150 form a helical membrane-spanning segment. Topologically, residues Leu-151–Lys-163 are extracellular. An intramembrane region (helical) is located at residues Asn-164–His-179. The Extracellular portion of the chain corresponds to His-180–Thr-181. The helical transmembrane segment at Phe-182–Leu-206 threads the bilayer. Over Lys-207–Gly-209 the chain is Cytoplasmic. The helical transmembrane segment at Ala-210–Ala-226 threads the bilayer. Over Gly-227–Thr-249 the chain is Extracellular. The helical transmembrane segment at Val-250–Ile-280 threads the bilayer. Topologically, residues Tyr-281–Asn-309 are cytoplasmic.

The protein belongs to the FNT transporter (TC 1.A.16) family. Homopentamer.

Its subcellular location is the cell membrane. It localises to the vacuole membrane. It carries out the reaction (S)-lactate(in) + H(+)(in) = (S)-lactate(out) + H(+)(out). It catalyses the reaction formate(in) + H(+)(in) = formate(out) + H(+)(out). The enzyme catalyses pyruvate(out) + H(+)(out) = pyruvate(in) + H(+)(in). The catalysed reaction is acetate(out) + H(+)(out) = acetate(in) + H(+)(in). Its activity is regulated as follows. Inhibited by diethylpyrocarbonate (DEPC). Protonophores, such as 2,4-dinitrophenol and carbonylcyanide-3-chlorophenylhydrazone, abolish transport. Inhibited by phloretin, furosemide, alpha-cyano-4-hydroxy-cinnamate and alpha-fluorocinnamate. Inhibited by the Malaria Box compound MMV007839 and its derivatives BH296 and BH267.meta. Inhibited by the Malaria Box compound MMV000972. Inhibited by broad-specificity anion transport inhibitor NPPB. In terms of biological role, monocarboxylate-proton symporter that mediates the efflux of the waste product lactate in the intraerythrocytic parasites; active in acidic-to-neutral pH range. Transports L-lactate. Transports D-lactate, pyruvate, acetate and formate. Essential for asexual growth but dispensable for the development of gametocytes. In Plasmodium falciparum (isolate 3D7), this protein is Formate-nitrite transporter.